Consider the following 64-residue polypeptide: MPKMKNNKGAAKRFKKTAGGIKYKHATKRHILTKRTTKNKRQLRPNSLLPRCEVAAVARMLPYA.

Belongs to the bacterial ribosomal protein bL35 family.

The sequence is that of Large ribosomal subunit protein bL35 from Vibrio vulnificus (strain CMCP6).